The chain runs to 374 residues: Alanine racemase (374 aa).

Lys35 serves as the catalytic Proton acceptor; specific for D-alanine. Lys35 carries the post-translational modification N6-(pyridoxal phosphate)lysine. Residue Arg133 coordinates substrate. Tyr261 serves as the catalytic Proton acceptor; specific for L-alanine. A substrate-binding site is contributed by Met315.

The protein belongs to the alanine racemase family. The cofactor is pyridoxal 5'-phosphate.

The catalysed reaction is L-alanine = D-alanine. The protein operates within amino-acid biosynthesis; D-alanine biosynthesis; D-alanine from L-alanine: step 1/1. In terms of biological role, catalyzes the interconversion of L-alanine and D-alanine. May also act on other amino acids. This chain is Alanine racemase (alr), found in Psychrobacter sp. (strain PRwf-1).